Here is a 391-residue protein sequence, read N- to C-terminus: MDLLPYDVVEHILERLDVKSLLNCKSVSKQWRSTIRCRAFQERQLMHRRQSCNPDVLLVSVADEFYLLKRVHQVMRTLVLGSSVSVRILTPWEDTLYKVCQSSCDGLICLYNTYASNIVVNPTTRWHREFPLSTFQRLDRYEHQVGSVSWAKLGFGKDKINGTYKPVWLYNSAELGGLNDDDEDYDDEDKNNISMICQGNNNTSTFCEVFDFTTKAWRFVVPASPYRILPYQDPVYVDGSLHWLTEGETTNVLSFDLHAETFQVVSKAPFLHHHDYSSRELIMCNLDDRLCVSEKMWPNQVIWSLDSDHKTWKEIYSIDLNITSSLFGSNGFALRPLGVFDKDKLLFCEPEYGDQLLTHDPKTKSYEFDYRFFSPTTALPLCYFQSLISIL.

The region spanning 1 to 43 is the F-box domain; sequence MDLLPYDVVEHILERLDVKSLLNCKSVSKQWRSTIRCRAFQER.

This Arabidopsis thaliana (Mouse-ear cress) protein is F-box protein At2g34280.